The sequence spans 100 residues: Large ribosomal subunit protein uL23 (100 aa).

It belongs to the universal ribosomal protein uL23 family. In terms of assembly, part of the 50S ribosomal subunit. Contacts protein L29, and trigger factor when it is bound to the ribosome.

In terms of biological role, one of the early assembly proteins it binds 23S rRNA. One of the proteins that surrounds the polypeptide exit tunnel on the outside of the ribosome. Forms the main docking site for trigger factor binding to the ribosome. The chain is Large ribosomal subunit protein uL23 from Mycobacterium leprae (strain Br4923).